The sequence spans 329 residues: Probable cell division protein WhiA (329 aa).

The H-T-H motif DNA-binding region spans 276–309; sequence SLEELGKVHEPPLTKDAIAGRIRRLLALADKTAR. The tract at residues 308–329 is disordered; that stretch reads ARSNGEPTTLESLPVEMRDDRG. The segment covering 309–318 has biased composition (polar residues); it reads RSNGEPTTLE.

This sequence belongs to the WhiA family.

Involved in cell division and chromosome segregation. The polypeptide is Probable cell division protein WhiA (Cutibacterium acnes (strain DSM 16379 / KPA171202) (Propionibacterium acnes)).